A 520-amino-acid polypeptide reads, in one-letter code: GMP synthase [glutamine-hydrolyzing] (520 aa).

One can recognise a Glutamine amidotransferase type-1 domain in the interval 9–202 (TILIIDFGSQ…VHRIVGVKPG (194 aa)). The active-site Nucleophile is Cys-86. Active-site residues include His-176 and Glu-178. The GMPS ATP-PPase domain occupies 203 to 395 (WTMGAYREQA…LGLPDSFIGR (193 aa)). 230 to 236 (SGGVDSS) lines the ATP pocket.

Homodimer.

The enzyme catalyses XMP + L-glutamine + ATP + H2O = GMP + L-glutamate + AMP + diphosphate + 2 H(+). Its pathway is purine metabolism; GMP biosynthesis; GMP from XMP (L-Gln route): step 1/1. Catalyzes the synthesis of GMP from XMP. The protein is GMP synthase [glutamine-hydrolyzing] of Brucella canis (strain ATCC 23365 / NCTC 10854 / RM-666).